The chain runs to 292 residues: 4-hydroxy-tetrahydrodipicolinate synthase (292 aa).

Residue Thr-45 coordinates pyruvate. Tyr-133 (proton donor/acceptor) is an active-site residue. Lys-161 serves as the catalytic Schiff-base intermediate with substrate. Ile-203 lines the pyruvate pocket.

It belongs to the DapA family. As to quaternary structure, homotetramer; dimer of dimers.

It localises to the cytoplasm. It carries out the reaction L-aspartate 4-semialdehyde + pyruvate = (2S,4S)-4-hydroxy-2,3,4,5-tetrahydrodipicolinate + H2O + H(+). The protein operates within amino-acid biosynthesis; L-lysine biosynthesis via DAP pathway; (S)-tetrahydrodipicolinate from L-aspartate: step 3/4. Its function is as follows. Catalyzes the condensation of (S)-aspartate-beta-semialdehyde [(S)-ASA] and pyruvate to 4-hydroxy-tetrahydrodipicolinate (HTPA). In Escherichia fergusonii (strain ATCC 35469 / DSM 13698 / CCUG 18766 / IAM 14443 / JCM 21226 / LMG 7866 / NBRC 102419 / NCTC 12128 / CDC 0568-73), this protein is 4-hydroxy-tetrahydrodipicolinate synthase.